A 302-amino-acid chain; its full sequence is Probable protein ABIL4 (302 aa).

2 disordered regions span residues 151-179 and 220-256; these read PSTG…YPSA and LLGK…QPGF. Residues 161 to 170 are compositionally biased toward polar residues; it reads ARLQTDNGQD.

This sequence belongs to the ABI family. As to quaternary structure, binds SCAR.

The protein resides in the cytoplasm. It is found in the cytoskeleton. Functionally, involved in regulation of actin and microtubule organization. Part of a WAVE complex that activates the Arp2/3 complex. The protein is Probable protein ABIL4 of Oryza sativa subsp. japonica (Rice).